The primary structure comprises 328 residues: Fructokinase-2 (328 aa).

This sequence belongs to the carbohydrate kinase PfkB family.

It catalyses the reaction D-fructose + ATP = D-fructose 6-phosphate + ADP + H(+). It functions in the pathway glycan biosynthesis; starch biosynthesis. Its function is as follows. May play an important role in maintaining the flux of carbon towards starch formation. The protein is Fructokinase-2 (FRK2) of Solanum lycopersicum (Tomato).